We begin with the raw amino-acid sequence, 880 residues long: GRB2-associated and regulator of MAPK protein 2 (880 aa).

Residues 12–320 (RWSMGAFPLD…HFLLLTDTPR (309 aa)) form a CABIT region. Disordered regions lie at residues 385-407 (PGAVRAPGPPGRLGPALPAPGDS), 461-483 (IVGPPRHEPEAPPPPVPPKSEAV), 527-548 (SSLSYYSSGLQDGAGSRSGSGS), 569-611 (SESS…ADTP), and 633-713 (APFG…ELGQ). Low complexity-rich tracts occupy residues 640-663 (PFSGPAHPSGAPAASSSGSISTSG) and 683-696 (QGYSAAPSSSLSSS). Serine 740 carries the post-translational modification Phosphoserine. One can recognise an SAM domain in the interval 813 to 877 (SALSLEEVSR…KIMQFIKGWR (65 aa)).

It belongs to the GAREM family.

Probable adapter protein that provides a critical link between cell surface epidermal growth factor receptor and the MAPK/ERK signaling pathway. The protein is GRB2-associated and regulator of MAPK protein 2 (Garem2) of Mus musculus (Mouse).